We begin with the raw amino-acid sequence, 780 residues long: MSSYRGSTRPRKRTREGENYGFRPHRGNSQELLAARIKKDITFLADPRGNSVAADDINYVAMSLSREANDPETISTILDCIQTTAFIIPVKIPHLATLIIRASLRVPLILEKAAAYFCLQYFTNLNSFLYYEAKVDLRMLICMSFALQPGTLKPLFSLLADAISKETKPSVWGDNFLRIILINLPYFIAANNDLGKKDFANEILDQCEIYVRHRKSSITLSNPLSIHDNLSEEELDLLYKQLILSRENDFTFPYISQPWKFFESDFVHIVPVSPSIPEWTFQPTPQQNELPSFKRFFELFNNFEIRTTPDASDVAASIFRDISVDVINHLEFNRVEAAQVLTDLDVYFTYKTFALRGTPVNELPNLDPSESRWKAEDIIVEAVLGELLGSQNTTYKPVYYHSLLIECCRIAPKILAPTFGRVIRLMYTMSSDLPLQTLDRFIDWFSHHLSNFNFHWKWNEWIPDVELDDLHPKKVFMRETITRELILSYYTRISDSLPEELRCLLGEQPSGPNFVYENETHPLYQQSSQIIEALRLHKPLEELDIILQSEEIQNSETSAVRLVMSCAYSLGSRSFSHALNVFEKHLNTLKHFSRKSLDSEIEVVDELFSFWKLQPFNAVMWLDKMLNYSIISITSIIEWLIKQDVTIWSRSYTWSLVNTTFNKLAARLRRSVSNKEDSSLINEANEEKEIVTNLLLSALRALISENAENIWVSHWLNLMLKYVESNFLSVKKDTIEEANEPVQENTSEEQEDTKMQPVDAVDEQPSENNQTAADATNEEK.

Positions 1-25 (MSSYRGSTRPRKRTREGENYGFRPH) are disordered. Serine 29 carries the post-translational modification Phosphoserine. The MIF4G domain maps to 34–249 (AARIKKDITF…KQLILSREND (216 aa)). The tract at residues 738–780 (ANEPVQENTSEEQEDTKMQPVDAVDEQPSENNQTAADATNEEK) is disordered.

The protein belongs to the NCBP1 family. As to quaternary structure, component of the nuclear cap-binding complex (CBC), a heterodimer composed of cbc1 and cbc2 that interacts with capped RNAs.

The protein resides in the cytoplasm. Its subcellular location is the perinuclear region. The protein localises to the nucleus. In terms of biological role, component of the CBC complex, which binds cotranscriptionally to the 5'-cap of pre-mRNAs and is involved in maturation, export and degradation of nuclear mRNAs. In Schizosaccharomyces pombe (strain 972 / ATCC 24843) (Fission yeast), this protein is Nuclear cap-binding protein subunit 1 (cbc1).